A 244-amino-acid polypeptide reads, in one-letter code: 1-(5-phosphoribosyl)-5-[(5-phosphoribosylamino)methylideneamino] imidazole-4-carboxamide isomerase (244 aa).

Aspartate 10 functions as the Proton acceptor in the catalytic mechanism. Aspartate 129 acts as the Proton donor in catalysis.

It belongs to the HisA/HisF family.

The protein localises to the cytoplasm. The catalysed reaction is 1-(5-phospho-beta-D-ribosyl)-5-[(5-phospho-beta-D-ribosylamino)methylideneamino]imidazole-4-carboxamide = 5-[(5-phospho-1-deoxy-D-ribulos-1-ylimino)methylamino]-1-(5-phospho-beta-D-ribosyl)imidazole-4-carboxamide. Its pathway is amino-acid biosynthesis; L-histidine biosynthesis; L-histidine from 5-phospho-alpha-D-ribose 1-diphosphate: step 4/9. This Rhodococcus jostii (strain RHA1) protein is 1-(5-phosphoribosyl)-5-[(5-phosphoribosylamino)methylideneamino] imidazole-4-carboxamide isomerase.